The following is a 637-amino-acid chain: Chaperone protein HtpG (637 aa).

Residues methionine 1–arginine 345 are a; substrate-binding. The interval glutamate 346–lysine 562 is b. Residues leucine 563–lysine 637 form a c region.

Belongs to the heat shock protein 90 family. Homodimer.

Its subcellular location is the cytoplasm. In terms of biological role, molecular chaperone. Has ATPase activity. This chain is Chaperone protein HtpG, found in Pseudoalteromonas translucida (strain TAC 125).